The sequence spans 196 residues: uncharacterized protein (196 aa).

Residues 7 to 67 enclose the HTH tetR-type domain; it reads RNTKEKILTA…AVIDNHVKIW (61 aa). The segment at residues 30 to 49 is a DNA-binding region (H-T-H motif); it reads SINDILDETATGKGQFYYYF.

This is an uncharacterized protein from Lactococcus lactis subsp. lactis (Streptococcus lactis).